The sequence spans 958 residues: Protein translocase subunit SecA (958 aa).

ATP is bound by residues glutamine 86, 104–108, and aspartate 494; that span reads GEGKT. Disordered regions lie at residues 863 to 883 and 902 to 937; these read AAAT…AEKT and QPIS…GTGK. Residues cysteine 941, cysteine 943, cysteine 952, and histidine 953 each coordinate Zn(2+).

This sequence belongs to the SecA family. Monomer and homodimer. Part of the essential Sec protein translocation apparatus which comprises SecA, SecYEG and auxiliary proteins SecDF. Other proteins may also be involved. Zn(2+) serves as cofactor.

Its subcellular location is the cell membrane. The protein localises to the cytoplasm. The catalysed reaction is ATP + H2O + cellular proteinSide 1 = ADP + phosphate + cellular proteinSide 2.. In terms of biological role, part of the Sec protein translocase complex. Interacts with the SecYEG preprotein conducting channel. Has a central role in coupling the hydrolysis of ATP to the transfer of proteins into and across the cell membrane, serving as an ATP-driven molecular motor driving the stepwise translocation of polypeptide chains across the membrane. The protein is Protein translocase subunit SecA of Bifidobacterium adolescentis (strain ATCC 15703 / DSM 20083 / NCTC 11814 / E194a).